Reading from the N-terminus, the 413-residue chain is Multidrug resistance protein MdtA (413 aa).

The N-terminal stretch at 1–20 (MKGSNTFRWAIAIGVVVAAA) is a signal peptide. 2 disordered regions span residues 31-57 (SPTA…RDGP) and 391-413 (EPQT…GARA). Basic and acidic residues predominate over residues 397 to 413 (ADEKSPSRHEGQKGARA).

Belongs to the membrane fusion protein (MFP) (TC 8.A.1) family. As to quaternary structure, part of a tripartite efflux system composed of MdtA, MdtB and MdtC.

It localises to the cell inner membrane. The protein is Multidrug resistance protein MdtA of Salmonella typhimurium (strain LT2 / SGSC1412 / ATCC 700720).